We begin with the raw amino-acid sequence, 287 residues long: MATKPQDANTTSREAITSKADSPPRPTALIFDSGVGGLSVYQEIRQLLPNLHYIYAFDNVAFPYGEKSGEFIVERVLEIVTAVQQSHPLAIVVIACNTASTVSLPALRERFAFPVVGVVPAIKPAVRLTRNGVVGLLATRATVHASYTLDLIARFATDCKIELLGSSELVEVAETKLHGGVVPLEVLKKILHPWLSMREPPDTIVLGCTHFPLLTEELAQVLPEGTRMVDSGAAIARRTAWLISSQENVISSQDENIAYCMALDEDTDALLPVLQSYGFPKLQKLPI.

A compositionally biased stretch (polar residues) spans 1 to 15 (MATKPQDANTTSREA). The tract at residues 1 to 25 (MATKPQDANTTSREAITSKADSPPR) is disordered. Residues 32 to 33 (DS) and 64 to 65 (YG) each bind substrate. Cys96 (proton donor/acceptor) is an active-site residue. Residue 97 to 98 (NT) coordinates substrate. Cys208 (proton donor/acceptor) is an active-site residue. 209–210 (TH) serves as a coordination point for substrate.

This sequence belongs to the aspartate/glutamate racemases family.

The catalysed reaction is L-glutamate = D-glutamate. It participates in cell wall biogenesis; peptidoglycan biosynthesis. Its function is as follows. Provides the (R)-glutamate required for cell wall biosynthesis. The protein is Glutamate racemase of Yersinia pseudotuberculosis serotype I (strain IP32953).